Here is a 31-residue protein sequence, read N- to C-terminus: Potassium channel toxin alpha-KTx 19.2 (31 aa).

3 disulfide bridges follow: cysteine 3-cysteine 22, cysteine 8-cysteine 27, and cysteine 12-cysteine 29.

It belongs to the short scorpion toxin superfamily. Potassium channel inhibitor family. Alpha-KTx 19 subfamily. Monomer. As to expression, expressed by the venom gland.

The protein localises to the secreted. In terms of biological role, blocks voltage-gated potassium channels rKv1.1/KCNA1, rKv1.2/KCNA2, hKv1.3/KCNA3, rKv1.6/KCNA6 (IC(50)=75.9 nM) and, to a lesser extent, Shaker IR (with the inactivation domain removed). In Buthus occitanus tunetanus (Common European scorpion), this protein is Potassium channel toxin alpha-KTx 19.2.